Reading from the N-terminus, the 431-residue chain is Glucose-1-phosphate adenylyltransferase (431 aa).

Lys-39 serves as a coordination point for beta-D-fructose 1,6-bisphosphate. Positions 40, 46, and 52 each coordinate AMP. Tyr-114 is a binding site for alpha-D-glucose 1-phosphate. Residue Arg-130 participates in AMP binding. Alpha-D-glucose 1-phosphate is bound by residues Gly-179, 194–195 (EK), and Ser-212. Residues Glu-370 and Arg-386 each coordinate AMP. Residues 419–423 (REMLR) and 429–431 (QER) contribute to the beta-D-fructose 1,6-bisphosphate site.

It belongs to the bacterial/plant glucose-1-phosphate adenylyltransferase family. As to quaternary structure, homotetramer.

It catalyses the reaction alpha-D-glucose 1-phosphate + ATP + H(+) = ADP-alpha-D-glucose + diphosphate. The protein operates within glycan biosynthesis; glycogen biosynthesis. Its activity is regulated as follows. Allosterically activated by fructose-1,6-bisphosphate (F16BP) and inhibited by AMP. Its function is as follows. Involved in the biosynthesis of ADP-glucose, a building block required for the elongation reactions to produce glycogen. Catalyzes the reaction between ATP and alpha-D-glucose 1-phosphate (G1P) to produce pyrophosphate and ADP-Glc. This chain is Glucose-1-phosphate adenylyltransferase, found in Escherichia coli O127:H6 (strain E2348/69 / EPEC).